Reading from the N-terminus, the 616-residue chain is KIF-binding protein (616 aa).

The tract at residues 52–78 (EEEEESEAEGKEERRDGPESGGRRGES) is disordered. A compositionally biased stretch (basic and acidic residues) spans 59 to 78 (AEGKEERRDGPESGGRRGES).

It belongs to the KIF-binding protein family.

The protein localises to the cytoplasm. Its subcellular location is the cytoskeleton. In terms of biological role, activator of KIF1B plus-end-directed microtubule motor activity. Required for organization of axonal microtubules, and axonal outgrowth and maintenance during peripheral and central nervous system development. The sequence is that of KIF-binding protein from Xenopus tropicalis (Western clawed frog).